Consider the following 364-residue polypeptide: S-adenosylmethionine:tRNA ribosyltransferase-isomerase (364 aa).

Belongs to the QueA family. Monomer.

It is found in the cytoplasm. It carries out the reaction 7-aminomethyl-7-carbaguanosine(34) in tRNA + S-adenosyl-L-methionine = epoxyqueuosine(34) in tRNA + adenine + L-methionine + 2 H(+). It participates in tRNA modification; tRNA-queuosine biosynthesis. Functionally, transfers and isomerizes the ribose moiety from AdoMet to the 7-aminomethyl group of 7-deazaguanine (preQ1-tRNA) to give epoxyqueuosine (oQ-tRNA). This Bradyrhizobium sp. (strain ORS 278) protein is S-adenosylmethionine:tRNA ribosyltransferase-isomerase.